A 103-amino-acid chain; its full sequence is Large ribosomal subunit protein uL24 (103 aa).

This sequence belongs to the universal ribosomal protein uL24 family. In terms of assembly, part of the 50S ribosomal subunit.

Its function is as follows. One of two assembly initiator proteins, it binds directly to the 5'-end of the 23S rRNA, where it nucleates assembly of the 50S subunit. Functionally, one of the proteins that surrounds the polypeptide exit tunnel on the outside of the subunit. This Haemophilus influenzae (strain PittEE) protein is Large ribosomal subunit protein uL24.